The chain runs to 147 residues: Large ribosomal subunit protein uL11 (147 aa).

Belongs to the universal ribosomal protein uL11 family. As to quaternary structure, part of the ribosomal stalk of the 50S ribosomal subunit. Interacts with L10 and the large rRNA to form the base of the stalk. L10 forms an elongated spine to which L12 dimers bind in a sequential fashion forming a multimeric L10(L12)X complex. In terms of processing, one or more lysine residues are methylated.

Forms part of the ribosomal stalk which helps the ribosome interact with GTP-bound translation factors. The protein is Large ribosomal subunit protein uL11 of Sorangium cellulosum (strain So ce56) (Polyangium cellulosum (strain So ce56)).